We begin with the raw amino-acid sequence, 280 residues long: Ribosomal RNA small subunit methyltransferase A (280 aa).

S-adenosyl-L-methionine is bound by residues N11, L13, G37, E57, D85, and N106.

This sequence belongs to the class I-like SAM-binding methyltransferase superfamily. rRNA adenine N(6)-methyltransferase family. RsmA subfamily.

It is found in the cytoplasm. It catalyses the reaction adenosine(1518)/adenosine(1519) in 16S rRNA + 4 S-adenosyl-L-methionine = N(6)-dimethyladenosine(1518)/N(6)-dimethyladenosine(1519) in 16S rRNA + 4 S-adenosyl-L-homocysteine + 4 H(+). Functionally, specifically dimethylates two adjacent adenosines (A1518 and A1519) in the loop of a conserved hairpin near the 3'-end of 16S rRNA in the 30S particle. May play a critical role in biogenesis of 30S subunits. The polypeptide is Ribosomal RNA small subunit methyltransferase A (Campylobacter concisus (strain 13826)).